A 2697-amino-acid chain; its full sequence is Target of rapamycin homolog (2697 aa).

Positions 1-25 are disordered; sequence MLQQHGISFQMNADRQNKAATTSNR. HEAT repeat units follow at residues 235–272, 649–687, 689–726, 731–768, 815–853, 863–900, and 1073–1110; these read LRVN…IVSQ, QTIY…PFLA, LAQP…LNPA, RLRL…QSPK, KNLK…STAY, SLLD…YTHK, and KYTG…LTHC. The FAT domain occupies 1438 to 2153; that stretch reads VLGRWAEQTK…IYALTVASRS (716 aa). Disordered regions lie at residues 1945 to 1981 and 2017 to 2039; these read TVIS…PQPA and SNSS…PSNS. A compositionally biased stretch (pro residues) spans 1969-1981; that stretch reads SPPPPAQKSPQPA. Positions 2030-2039 are enriched in polar residues; that stretch reads PLSNDSPSNS. A PI3K/PI4K catalytic domain is found at 2332–2647; it reads FSSKMNVITS…TTDSIMETIK (316 aa). The segment at 2338 to 2344 is G-loop; the sequence is VITSKQR. Positions 2512–2520 are catalytic loop; the sequence is GLGDRHPSN. The interval 2532-2557 is activation loop; it reads HIDFGDCFEVAMLREKFPERVPFRLT. Residues 2615-2635 are disordered; that stretch reads DPKTRKDTGGRQNMAGAVLPS. In terms of domain architecture, FATC spans 2665 to 2697; that stretch reads EPLQVTEQLAMLTEQATSPLNLCQSYIGWCPFW.

Belongs to the PI3/PI4-kinase family. As to expression, ubiquitous. Expressed in all major tissues and organs, including the intestine, gonads and hypodermal cells. Expressed in neurons.

The protein localises to the nucleus. It catalyses the reaction L-seryl-[protein] + ATP = O-phospho-L-seryl-[protein] + ADP + H(+). The catalysed reaction is L-threonyl-[protein] + ATP = O-phospho-L-threonyl-[protein] + ADP + H(+). In terms of biological role, serine/threonine-protein kinase that regulates the mRNA translation machinery, probably by modulating the activity of translation factors such as eIF-4G and eIF-2. It may have some protein kinase activity instead of lipid kinase activity. May play a role in P-granule degradation by autophagy in somatic cells during embryogenesis. Required, during larval development, for the establishment of the proper number of germline progenitors, probably upstream of rsks-1 and ife-1. Required for larval development. May act as a mediator of lifespan regulation by insulin signaling and nutrient sensing. The polypeptide is Target of rapamycin homolog (Caenorhabditis elegans).